We begin with the raw amino-acid sequence, 1325 residues long: Nonribosomal peptide synthetase (1325 aa).

Positions 248 to 644 (YQQLDRLSTR…LGEIEYQIQQ (397 aa)) are adenylation. The 78-residue stretch at 779–856 (EIVNPGEITL…DQARLLRPLS (78 aa)) folds into the Carrier domain. O-(pantetheine 4'-phosphoryl)serine is present on Ser-816. Positions 893-1310 (EDVYPCTPLQ…DDYSTTLHTL (418 aa)) are condensation.

It belongs to the NRP synthetase family. Requires pantetheine 4'-phosphate as cofactor.

It participates in antifungal biosynthesis. Functionally, nonribosomal peptide synthetase; part of the gene cluster that mediates the biosynthesis of the tetrahydropyranyl antifungal agent lanomycin that acts as an inhibitor of CYP51 and blocks the ergosterol biosynthesis. The biosynthesis probably begins with the formation of an hexaketide, followed by methionine mediated alkylation of C-2 and C-6, and methylation of the reduced C-3 oxygen, pyran forming reductive ring closure, oxygenation of C-4, beta-keto reduction, enoyl reduction and dehydration of the remaining oxygens, and finally, acylation with glycine to complete the biosynthesis. This Pyrenophora dematioidea (Helminthosporium dematioideum) protein is Nonribosomal peptide synthetase.